Here is a 307-residue protein sequence, read N- to C-terminus: Putative S-adenosyl-L-methionine-dependent methyltransferase MMAR_4570 (307 aa).

S-adenosyl-L-methionine-binding positions include Asp-128 and 157-158 (DL).

It belongs to the UPF0677 family.

Its function is as follows. Exhibits S-adenosyl-L-methionine-dependent methyltransferase activity. The polypeptide is Putative S-adenosyl-L-methionine-dependent methyltransferase MMAR_4570 (Mycobacterium marinum (strain ATCC BAA-535 / M)).